A 495-amino-acid polypeptide reads, in one-letter code: UPF0371 protein CE2832 (495 aa).

It belongs to the UPF0371 family.

This chain is UPF0371 protein CE2832, found in Corynebacterium efficiens (strain DSM 44549 / YS-314 / AJ 12310 / JCM 11189 / NBRC 100395).